We begin with the raw amino-acid sequence, 415 residues long: Protrudin (415 aa).

Residues 1–24 are disordered; it reads MQTSDRDLSGPEASPSGMPEVLSE. Topologically, residues 1-66 are cytoplasmic; the sequence is MQTSDRDLSG…AGDGVRYLLR (66 aa). The tract at residues 1–92 is sufficient for homooligomerization; the sequence is MQTSDRDLSG…LFLTLNEGAW (92 aa). The sufficient for localization to endoplasmic reticulum tubular network and for interactions with REEP1, REEP5, ATL1, ATL2, ATL3 and SPAST stretch occupies residues 1-210; the sequence is MQTSDRDLSG…LYLLPLCWVL (210 aa). Positions 51-64 are necessary for interaction with RAB11A and function in neurite outgrowth; that stretch reads LEPLKDAGDGVRYL. Residues 67 to 87 traverse the membrane as a helical segment; the sequence is WQMPLCSLLTCLGLNILFLTL. Asparagine 88 is a topological domain (lumenal). The helical transmembrane segment at 89 to 109 threads the bilayer; the sequence is EGAWYSMGALMISVPALLGYL. Residues 110-192 lie on the Cytoplasmic side of the membrane; it reads QEVCRGQLPE…NPVVSSQFYG (83 aa). Residues 193–213 constitute an intramembrane region (helical); the sequence is ALLGMVCMLYLLPLCWVLALL. Over 214 to 415 the chain is Cytoplasmic; sequence NSTLFLGNGD…CASCNQTLSK (202 aa). A disordered region spans residues 254–290; sequence QGAGGRGLLDSSPAPTPTEDLTPGSVEEAEEAEPDEE. The segment at 275–365 is necessary for interaction with KIF5A; sequence TPGSVEEAEE…GCAATFSVLK (91 aa). A compositionally biased stretch (acidic residues) spans 280-290; sequence EEAEEAEPDEE. Residues 290-296 form a necessary for interaction with VAPA region; the sequence is EFKDAIE. The FYVE-type zinc finger occupies 348 to 414; it reads TNNFGNCAGC…VCASCNQTLS (67 aa). Residues cysteine 354, cysteine 357, cysteine 370, cysteine 373, cysteine 378, cysteine 381, cysteine 406, and cysteine 409 each contribute to the Zn(2+) site.

As to quaternary structure, can form homooligomers (monomers, dimers and tetramers). Interacts with RAB11A (GDP-bound form); regulates RAB11A. Interacts with FKBP8; may negatively regulate ZFYVE27 phosphorylation. Isoform 1 interacts to a greater extent than isoform 2 with VAPB (via MSP domain). Isoform 1 interacts to a greater extent than isoform 2 with VAPA (via MSP domain). Interaction with VAPA may regulate ZFYVE27 retention in the endoplasmic reticulum and its function in cell projections formation. Interacts with ATL2, ATL3, SPAST and RTN3. Interacts with REEP1, REEP5 and ATL1. Interacts with RAB11B (GDP-bound form), SURF4, KIF5B and KIF5C. Isoform 1 and 2 interact with KIFA. Post-translationally, phosphorylated. Phosphorylation is induced by NGF through the MAPK/ERK pathway and modulates interaction with RAB11A. Astrocytes express both isoform 1 and isoform 2 and oligodendrocytes express only isoform 2 (at protein level). Isoform 1 is expressed specifically in the central nervous system and selectively in neuronal cells. Isoform 2 is expressed in cerebrum, cerebellum, spinal cord, heart, thymus, spleen, intestine and lung.

It is found in the recycling endosome membrane. It localises to the endoplasmic reticulum membrane. The protein resides in the cell projection. The protein localises to the growth cone membrane. In terms of biological role, key regulator of RAB11-dependent vesicular trafficking during neurite extension through polarized membrane transport. Promotes axonal elongation and contributes to the establishment of neuronal cell polarity. Involved in nerve growth factor-induced neurite formation in VAPA-dependent manner. Contributes to both the formation and stabilization of the tubular ER network. Involved in ER morphogenesis by regulating the sheet-to-tubule balance and possibly the density of tubule interconnections. Acts as an adapter protein that facilitates the interaction of KIF5A with VAPA, VAPB, SURF4, RAB11A, RAB11B and RTN3 and the ZFYVE27-KIF5A complex contributes to the transport of these proteins in neurons. Can induce formation of neurite-like membrane protrusions in non-neuronal cells in a KIF5A/B-dependent manner. The sequence is that of Protrudin (Zfyve27) from Mus musculus (Mouse).